A 1513-amino-acid polypeptide reads, in one-letter code: DNA topoisomerase 2-binding protein 1-A (1513 aa).

BRCT domains follow at residues 101–189 (VYNM…YSDV) and 194–283 (YLCP…MYKI). A disordered region spans residues 289–308 (IKSVPDTSTPTGGNSKPNSR). BRCT domains follow at residues 354 to 444 (APDD…IYFH), 530 to 621 (ADTS…SNAL), and 629 to 726 (EGST…SYLV). Over residues 789–799 (QHNKNPQTSGG) the composition is skewed to polar residues. The tract at residues 789 to 809 (QHNKNPQTSGGESKVLQREPS) is disordered. Residues 844 to 850 (PNQKNRT) carry the Nuclear localization signal motif. The region spanning 892–984 (DNSKLLINVV…KRVPEALYPH (93 aa)) is the BRCT 6 domain. Disordered stretches follow at residues 1031 to 1053 (ETSDDQVKKAAGDGNPQNPSKDV) and 1086 to 1109 (SVGRAGFDNSPCTPEGARSTRNGR). A Phosphoserine modification is found at Ser1131. BRCT domains lie at 1253–1344 (SKEE…DYEW) and 1383–1480 (IAEG…NYCL). The Nuclear localization signal signature appears at 1508–1511 (KRSR).

It belongs to the TOPBP1 family. In terms of assembly, interacts with cdc45. Interacts (via BRCT domains) with ticrr; interaction is cdk2-dependent. Interacts with atr in the presence of atrip. Interacts with recql4 (via N-terminus). Interacts with gmnc. Interacts with cip2a; forming the CIP2A-TOPBP1 complex. Phosphorylation at Ser-1131 is essential for phosphorylation of chek1, and thus for checkpoint regulation.

Its subcellular location is the nucleus. The protein localises to the chromosome. The protein resides in the cytoplasm. It localises to the cytoskeleton. It is found in the microtubule organizing center. Its subcellular location is the centrosome. The protein localises to the spindle pole. In terms of biological role, scaffold protein that acts as a key protein-protein adapter in DNA replication and DNA repair. Composed of multiple BRCT domains, which specifically recognize and bind phosphorylated proteins, bringing proteins together into functional combinations. Required for DNA replication initiation but not for the formation of pre-replicative complexes or the elongation stages. Necessary for the loading of replication factors onto chromatin, including gmnc, cdc45, DNA polymerases and components of the GINS complex such as ginsl/sld5. Plays a central role in DNA repair by bridging proteins and promoting recruitment of proteins to DNA damage sites. Involved in double-strand break (DSB) repair via homologous recombination in S-phase by promoting the exchange between the DNA replication factor A (RPA) complex and RAD51. Involved in microhomology-mediated end-joining (MMEJ) DNA repair by promoting recruitment of polymerase theta (POLQ) to DNA damage sites during mitosis. In response to DNA damage, triggers the recruitment of checkpoint signaling proteins on chromatin, which activate the chek1 signaling pathway and block S-phase progression. Increases the kinase activity of atr to numerous substrates, and is required for the phosphorylation of Rad1. Together with cip2a, plays an essential role in the response to genome instability generated by the presence of acentric chromosome fragments derived from shattered chromosomes within micronuclei. The CIP2A-TOPBP1 complex tethers chromosome fragments during mitosis to ensure clustered segregation of the fragments to a single daughter cell nucleus, facilitating re-ligation with limited chromosome scattering and loss. This Xenopus laevis (African clawed frog) protein is DNA topoisomerase 2-binding protein 1-A (topbp1-A).